The sequence spans 612 residues: Alpha-glycerophosphate oxidase (612 aa).

21–49 (DLLIIGGGITGAGVALQAAASGLDTGLIE) serves as a coordination point for FAD. A compositionally biased stretch (basic and acidic residues) spans 399–408 (ETSTSEKELD). A disordered region spans residues 399–418 (ETSTSEKELDPSAVSRGSSF).

It belongs to the FAD-dependent glycerol-3-phosphate dehydrogenase family. Requires FAD as cofactor.

It localises to the cytoplasm. It carries out the reaction sn-glycerol 3-phosphate + O2 = dihydroxyacetone phosphate + H2O2. This Streptococcus pyogenes serotype M6 (strain ATCC BAA-946 / MGAS10394) protein is Alpha-glycerophosphate oxidase (glpO).